The chain runs to 368 residues: FAD-dependent monooxygenase phomE (368 aa).

Residue alanine 11 coordinates FAD. Residues arginine 140 and tyrosine 178 contribute to the active site. Residues aspartate 249 and glycine 262 each coordinate FAD.

The protein belongs to the paxM FAD-dependent monooxygenase family. Monomer. The cofactor is FAD.

Functionally, FAD-dependent monooxygenase; part of the gene cluster that mediates the biosynthesis of the phomopsins, a group of hexapeptide mycotoxins which infects lupins and causes lupinosis disease in livestock. The role of phomE within the phomopsins biosynthesis pathway has still to be determined. The pathway starts with the processing of the precursor phomA by several endopeptidases including kexin proteases as well as the cluster-specific S41 family peptidase phomP1 and the oligopeptidase phomG to produce 10 identical copies of the hexapeptide Tyr-Val-Ile-Pro-Ile-Asp. After being excised from the precursor peptide, the core peptides are cyclized and modified post-translationally by enzymes encoded within the gene cluster. The timing and order of proteolysis of the phomA precursor and PTMs are still unknown. Two tyrosinase-like enzymes, phomQ1 and phomQ2, catalyze the chlorination and hydroxylation of Tyr, respectively. PhomYb, is proposed to be involved in the construction of the macrocyclic structure. The other 4 ustYa family proteins may be involved in PTMs that generate the unique structure of phomopsin A. PhomYa is required for the hydroxylation of C-beta of Tyr. PhomYc, phomYd, and phomYe are responsible for the biosynthesis of 2,3-dehydroisoleucine (dIle), 2,3-dehydroaspartic acid (dAsp), and 3,4-dehydroproline (dPro), respectively. While dIle formation by phomYc is indispensable for the installation of dAsp by phomYd, the order of the other PTMs have not been elucidated yet. Most of the biosynthetic enzymes likely have broad substrate specificity, and thus, there might be a metabolic grid from a precursor to phomopsin A. The enzyme(s) responsible for the biosynthesis of 3,4-dehydrovaline (dVal) have also not been identified yet. Finally, phomM acts as an S-adenosylmethionine-dependent alpha-N-methyltransferase that catalyzes two successive N-methylation reactions, converting N-desmethyl-phomopsin A to phomopsin A and phomopsin A further to an N,N-dimethylated congener called phomopsin E. This is FAD-dependent monooxygenase phomE from Diaporthe leptostromiformis (Lupinosis disease fungus).